A 466-amino-acid polypeptide reads, in one-letter code: Ankyrin repeat and SOCS box protein 18 (466 aa).

ANK repeat units follow at residues 119 to 148, 151 to 180, 184 to 213, 218 to 247, 251 to 288, and 292 to 321; these read ELTT…DPDA, GGRG…DPDL, EGLA…SVQR, GRDT…HVDA, RGET…EADA, and DERS…DAGA. The 59-residue stretch at 405 to 463 folds into the SOCS box domain; the sequence is QMHKPFYQSLFALALTPRCLQHLCRCALRRLFGKRCFDLIPLLPLPKPLQNYLLLEPQG.

This sequence belongs to the ankyrin SOCS box (ASB) family.

The protein operates within protein modification; protein ubiquitination. Its function is as follows. May be a substrate-recognition component of a SCF-like ECS (Elongin-Cullin-SOCS-box protein) E3 ubiquitin-protein ligase complex which mediates the ubiquitination and subsequent proteasomal degradation of target proteins. This chain is Ankyrin repeat and SOCS box protein 18 (ASB18), found in Homo sapiens (Human).